The sequence spans 316 residues: Actinorhodin polyketide synthase bifunctional cyclase/dehydratase (316 aa).

It functions in the pathway antibiotic biosynthesis; actinorhodin biosynthesis. In terms of biological role, is needed for correct cyclization of the oligoketide leading to isochromanequinone formation. This Streptomyces coelicolor (strain ATCC BAA-471 / A3(2) / M145) protein is Actinorhodin polyketide synthase bifunctional cyclase/dehydratase.